The primary structure comprises 404 residues: Cysteine desulfurase IscS (404 aa).

Residues 75 to 76 (AT), Asn155, Gln183, and 203 to 205 (SAH) each bind pyridoxal 5'-phosphate. N6-(pyridoxal phosphate)lysine is present on Lys206. Residue Thr243 coordinates pyridoxal 5'-phosphate. Cys328 acts as the Cysteine persulfide intermediate in catalysis. Cys328 serves as a coordination point for [2Fe-2S] cluster.

Belongs to the class-V pyridoxal-phosphate-dependent aminotransferase family. NifS/IscS subfamily. Homodimer. Forms a heterotetramer with IscU, interacts with other sulfur acceptors. Pyridoxal 5'-phosphate is required as a cofactor.

The protein localises to the cytoplasm. The enzyme catalyses (sulfur carrier)-H + L-cysteine = (sulfur carrier)-SH + L-alanine. The protein operates within cofactor biosynthesis; iron-sulfur cluster biosynthesis. Functionally, master enzyme that delivers sulfur to a number of partners involved in Fe-S cluster assembly, tRNA modification or cofactor biosynthesis. Catalyzes the removal of elemental sulfur atoms from cysteine to produce alanine. Functions as a sulfur delivery protein for Fe-S cluster synthesis onto IscU, an Fe-S scaffold assembly protein, as well as other S acceptor proteins. This chain is Cysteine desulfurase IscS, found in Proteus mirabilis (strain HI4320).